The sequence spans 664 residues: DNA ligase (664 aa).

NAD(+) contacts are provided by residues 34-38 (DAEYD), 83-84 (SL), and glutamate 114. Lysine 116 (N6-AMP-lysine intermediate) is an active-site residue. Positions 137, 172, 288, and 312 each coordinate NAD(+). Residues cysteine 406, cysteine 409, cysteine 424, and cysteine 429 each coordinate Zn(2+). Positions 586 to 664 (VRDNRLEGLT…EEEFRQMVMS (79 aa)) constitute a BRCT domain.

The protein belongs to the NAD-dependent DNA ligase family. LigA subfamily. The cofactor is Mg(2+). Mn(2+) is required as a cofactor.

It carries out the reaction NAD(+) + (deoxyribonucleotide)n-3'-hydroxyl + 5'-phospho-(deoxyribonucleotide)m = (deoxyribonucleotide)n+m + AMP + beta-nicotinamide D-nucleotide.. In terms of biological role, DNA ligase that catalyzes the formation of phosphodiester linkages between 5'-phosphoryl and 3'-hydroxyl groups in double-stranded DNA using NAD as a coenzyme and as the energy source for the reaction. It is essential for DNA replication and repair of damaged DNA. In Carboxydothermus hydrogenoformans (strain ATCC BAA-161 / DSM 6008 / Z-2901), this protein is DNA ligase.